The chain runs to 556 residues: M-phase inducer phosphatase (556 aa).

Disordered stretches follow at residues 165–186 (STDG…QERR) and 257–297 (TSGL…RPRK). Residues 287 to 297 (KSAHPNMRPRK) show a composition bias toward basic residues. The Rhodanese domain maps to 371-474 (MFDNIMIIDC…FFAEHRSLCY (104 aa)). Cys421 is an active-site residue. Residues 505–516 (RAQTFAFGQQSP) show a composition bias toward polar residues. The segment at 505-556 (RAQTFAFGQQSPEMEDSPTGRCRNNPGDRKLLASPFNDSPGSRFPGRRMLSY) is disordered.

It belongs to the MPI phosphatase family.

It carries out the reaction O-phospho-L-tyrosyl-[protein] + H2O = L-tyrosyl-[protein] + phosphate. Functionally, this protein functions as a dosage-dependent inducer in mitotic control. It is a tyrosine protein phosphatase required for progression of the cell cycle. It may directly dephosphorylate p34(cdc2) and activate the p34(cdc2) kinase activity. This is M-phase inducer phosphatase (nimT) from Emericella nidulans (strain FGSC A4 / ATCC 38163 / CBS 112.46 / NRRL 194 / M139) (Aspergillus nidulans).